We begin with the raw amino-acid sequence, 569 residues long: Proline--tRNA ligase (569 aa).

It belongs to the class-II aminoacyl-tRNA synthetase family. ProS type 1 subfamily. In terms of assembly, homodimer.

The protein resides in the cytoplasm. The catalysed reaction is tRNA(Pro) + L-proline + ATP = L-prolyl-tRNA(Pro) + AMP + diphosphate. Functionally, catalyzes the attachment of proline to tRNA(Pro) in a two-step reaction: proline is first activated by ATP to form Pro-AMP and then transferred to the acceptor end of tRNA(Pro). As ProRS can inadvertently accommodate and process non-cognate amino acids such as alanine and cysteine, to avoid such errors it has two additional distinct editing activities against alanine. One activity is designated as 'pretransfer' editing and involves the tRNA(Pro)-independent hydrolysis of activated Ala-AMP. The other activity is designated 'posttransfer' editing and involves deacylation of mischarged Ala-tRNA(Pro). The misacylated Cys-tRNA(Pro) is not edited by ProRS. In Campylobacter jejuni subsp. jejuni serotype O:23/36 (strain 81-176), this protein is Proline--tRNA ligase.